Reading from the N-terminus, the 232-residue chain is tRNA1(Val) (adenine(37)-N6)-methyltransferase (232 aa).

This sequence belongs to the methyltransferase superfamily. tRNA (adenine-N(6)-)-methyltransferase family.

It is found in the cytoplasm. It catalyses the reaction adenosine(37) in tRNA1(Val) + S-adenosyl-L-methionine = N(6)-methyladenosine(37) in tRNA1(Val) + S-adenosyl-L-homocysteine + H(+). Functionally, specifically methylates the adenine in position 37 of tRNA(1)(Val) (anticodon cmo5UAC). The chain is tRNA1(Val) (adenine(37)-N6)-methyltransferase from Haemophilus influenzae (strain ATCC 51907 / DSM 11121 / KW20 / Rd).